Here is a 192-residue protein sequence, read N- to C-terminus: Lipid A acyltransferase PagP (192 aa).

The signal sequence occupies residues 1 to 26 (MTVVNKSFLTILIFFCQILFPLNASA). Catalysis depends on residues His-64, Asp-107, and Ser-108.

Belongs to the lipid A palmitoyltransferase family. Homodimer.

Its subcellular location is the cell outer membrane. It catalyses the reaction a lipid A + a 1,2-diacyl-sn-glycero-3-phosphocholine = a hepta-acyl lipid A + a 2-acyl-sn-glycero-3-phosphocholine. The enzyme catalyses a lipid IVA + a 1,2-diacyl-sn-glycero-3-phosphocholine = a lipid IVB + a 2-acyl-sn-glycero-3-phosphocholine. It carries out the reaction a lipid IIA + a 1,2-diacyl-sn-glycero-3-phosphocholine = a lipid IIB + a 2-acyl-sn-glycero-3-phosphocholine. Functionally, transfers a fatty acid residue from the sn-1 position of a phospholipid to the N-linked hydroxyfatty acid chain on the proximal unit of lipid A or its precursors. This chain is Lipid A acyltransferase PagP, found in Cronobacter sakazakii (strain ATCC BAA-894) (Enterobacter sakazakii).